We begin with the raw amino-acid sequence, 108 residues long: Protein RnfH (108 aa).

Belongs to the UPF0125 (RnfH) family.

In Laribacter hongkongensis (strain HLHK9), this protein is Protein RnfH.